A 470-amino-acid chain; its full sequence is Acetyl-CoA decarbonylase/synthase complex subunit beta 2 (470 aa).

Residues cysteine 189, cysteine 192, cysteine 278, and cysteine 280 each coordinate [Ni-Fe-S] cluster.

It belongs to the CdhC family. Monomer. The ACDS complex is made up of alpha, epsilon, beta, gamma and delta chains with a probable stoichiometry of (alpha(2)epsilon(2))(4)-beta(8)-(gamma(1)delta(1))(8) (Potential). It depends on [Ni-Fe-S] cluster as a cofactor.

The catalysed reaction is Co(I)-[corrinoid Fe-S protein] + acetyl-CoA + H(+) = methyl-Co(III)-[corrinoid Fe-S protein] + CO + CoA. It functions in the pathway one-carbon metabolism; methanogenesis from acetate. Its function is as follows. Part of a complex that catalyzes the reversible cleavage of acetyl-CoA, allowing growth on acetate as sole source of carbon and energy. The alpha-epsilon complex generates CO from CO(2), while the beta subunit (this protein) combines the CO with CoA and a methyl group to form acetyl-CoA. The methyl group, which is incorporated into acetyl-CoA, is transferred to the beta subunit by a corrinoid iron-sulfur protein (the gamma-delta complex). In Methanosarcina acetivorans (strain ATCC 35395 / DSM 2834 / JCM 12185 / C2A), this protein is Acetyl-CoA decarbonylase/synthase complex subunit beta 2 (cdhC2).